The sequence spans 594 residues: MRLADARVAIEGVNLEIDGGRFAAKVVAGWEVAVEADIFCDGHDSIDAAVLHRQRGTDDWTEVRMEFLVNDRWQARVTFAENAFHELTFLAWRDLYTTWRKEVAKKLAAGQKIDLELEEGRRLLQSVETAGAEDRALVDRILGEDGADQEAGARFARMSSPEAVAAMKRCAPRTNLTCYKILPIFADREAAAFSAWYEMMPRSQSGDPERHGTFDDVIRKLPYVRDLGFDVLYFTPIHPIGRVNRKGRNNSLTPGPDDPGSPYAIGSEEGGHDAIHPELGDFESFGRLVEAAHAHGLEVALDFAIQCAPDHPWIREHPEWFDWRPDGTIKFAENPPKKYEDIVNVHFYRGALPELWYALRDVVLFWVEKGVKIFRVDNPHTKPFPFWEWMIGEVQSQHPDVIFLAEAFTRPKVMKRLGKVGYGQSYSYFTWRNTKAELIDYLTELTTEECRHYMRPNFFANTPDINPVYLQHSGRAGFRVRLALAATLGGNYGLYNGYEICEATPVPGKEEYFNSEKYQLRAWDFDQPGHIQDDIRLMNHIRRTHPAMRDFTRLRFYDAHNDSVLAYGKSTEDKQDFLLFHVNLDPHAAQTFEF.

The interval 244 to 270 (NRKGRNNSLTPGPDDPGSPYAIGSEEG) is disordered. Residues K246, Q306, and D341 each contribute to the alpha-maltose 1-phosphate site. D377 (nucleophile) is an active-site residue. N378 is a binding site for alpha-maltose 1-phosphate. Residue E406 is the Proton donor of the active site. 517 to 518 (KY) is an alpha-maltose 1-phosphate binding site.

Belongs to the glycosyl hydrolase 13 family. GlgE subfamily. Homodimer.

The enzyme catalyses alpha-maltose 1-phosphate + [(1-&gt;4)-alpha-D-glucosyl](n) = [(1-&gt;4)-alpha-D-glucosyl](n+2) + phosphate. Its function is as follows. Maltosyltransferase that uses maltose 1-phosphate (M1P) as the sugar donor to elongate linear or branched alpha-(1-&gt;4)-glucans. Is involved in a branched alpha-glucan biosynthetic pathway from trehalose, together with TreS, Mak and GlgB. The chain is Alpha-1,4-glucan:maltose-1-phosphate maltosyltransferase from Cereibacter sphaeroides (Rhodobacter sphaeroides).